Here is a 2411-residue protein sequence, read N- to C-terminus: Polyprotein P1234 (2411 aa).

In terms of domain architecture, Alphavirus-like MT spans 30–257 (EAVQTTPNDH…ESRKLLQSWH (228 aa)). Residues 242–261 (GSTLYTESRKLLQSWHLPST) form a nsP1 membrane-binding region. Residues cysteine 415 and cysteine 417 are each lipidated (S-palmitoyl cysteine; by host). Positions 688-840 (ELVNPPFHEF…HDICSEVFHK (153 aa)) constitute a (+)RNA virus helicase ATP-binding domain. 719 to 726 (GVPGSGKS) is a binding site for a ribonucleoside 5'-triphosphate. In terms of domain architecture, (+)RNA virus helicase C-terminal spans 841–989 (SISRRCTQDI…IAEWEAEHQG (149 aa)). One can recognise a Peptidase C9 domain in the interval 1002–1325 (NTFMNKVNVC…RKANSIFQNT (324 aa)). The nucleolus localization signal stretch occupies residues 1003 to 1022 (TFMNKVNVCWAKTLTPVLET). The For cysteine protease nsP2 activity role is filled by cysteine 1011. The short motif at 1056–1065 (TKMYGFDLDT) is the Nuclear export signal element. Catalysis depends on histidine 1081, which acts as the For cysteine protease nsP2 activity. The short motif at 1180 to 1184 (PNKKI) is the Nuclear localization signal element. The Macro domain maps to 1332-1491 (APAYRVKRGD…KIKEAIDHRT (160 aa)). Aspartate 1341, asparagine 1355, glycine 1363, glycine 1443, isoleucine 1444, and tyrosine 1445 together coordinate ADP-D-ribose. Zn(2+)-binding residues include cysteine 1593, cysteine 1595, cysteine 1618, and cysteine 1636. Residues 1681–1720 (DSSIGSLPVGDTRPIPAPRTIFRPVPAPRAPVLRTTPPPK) form a disordered region. Short sequence motifs (FGDF; binding to host G3BP1) lie at residues 1760–1763 (FGDF) and 1778–1781 (FGDF). A RdRp catalytic domain is found at 2165 to 2280 (DHVLETDIAS…HGIISDKLMA (116 aa)).

As to quaternary structure, interacts with non-structural protein 3. Interacts with RNA-directed RNA polymerase nsP4. Interacts with protease nsP2. interacts with itself. In terms of assembly, interacts with mRNA-capping enzyme nsP1. Interacts with host DDX1. Interacts with host DDX3. Interacts (via C-terminus) with host G3BP1; this interaction inhibits the formation of host stress granules on viral mRNAs and the nsp3-G3BP1 complexes bind viral RNAs and probably orchestrate the assembly of viral replication complexes. Interacts (via C-terminus) with host G3BP2; this interaction inhibits the formation of host stress granules on viral mRNAs and the nsp3-G3BP2 complexes bind viral RNAs and probably orchestrate the assembly of viral replication complexes. Interacts with mRNA-capping enzyme nsP1. Interacts with protease nsP2. interacts with itself. As to quaternary structure, interacts with RNA-directed RNA polymerase nsP4. Interacts with mRNA-capping enzyme nsP1. Interacts with KPNA1/karyopherin-alpha1; this interaction probably allows the active transport of protease nsP2 into the host nucleus. It depends on Mg(2+) as a cofactor. Mn(2+) serves as cofactor. In terms of processing, specific enzymatic cleavages in vivo yield mature proteins. The processing of the polyprotein is temporally regulated. In early stages (1.7 hpi), P1234 is first cleaved in trans through its nsP2 protease activity, releasing P123' and nsP4, which associate to form the early replication complex. At the same time, P1234 is also cut at the nsP1/nsP2 site early in infection but with lower efficiency. After replication of the viral minus-strand RNAs (4 hpi), the polyproteins are cut at the nsP1/nsP2 and nsP2/nsP3 sites very efficiently, preventing accumulation of P123' and P1234 and allowing the formation of the late replication complex. NsP3'/nsP4 site is not cleaved anymore and P34 is produced rather than nsP4. Post-translationally, specific enzymatic cleavages in vivo yield mature proteins. The processing of the polyprotein is temporally regulated. In early stages (1.7 hpi), P123 is cleaved at the nsP1/nsP2 site with low efficiency. After replication of the viral minus-strand RNAs (4 hpi), the polyproteins are cut at the nsP1/nsP2 and nsP2/nsP3 sites very efficiently, preventing accumulation of P123 and allowing the formation of the late replication complex. Specific enzymatic cleavages in vivo yield mature proteins. The processing of the polyprotein is temporally regulated. In early stages (1.7 hpi), P123' is cleaved at the nsP1/nsP2 site with low efficiency. After replication of the viral minus-strand RNAs (4 hpi), the polyproteins are cut at the nsP1/nsP2 and nsP2/nsP3 sites very efficiently, preventing accumulation of P123' and allowing the formation of the late replication complex. In terms of processing, palmitoylated by host palmitoyltransferases ZDHHC2 and ZDHHC19. Post-translationally, phosphorylated by host on serines and threonines. Ubiquitinated; targets the protein for rapid degradation via the ubiquitin system. Nsp4 is present in extremely low quantities due to low frequency of translation through the amber stop-codon and the degradation by the ubiquitin pathway.

The protein localises to the host cytoplasmic vesicle membrane. It is found in the host cell membrane. The protein resides in the host cell projection. Its subcellular location is the host filopodium. It localises to the host nucleus. The protein localises to the host cytoplasm. The catalysed reaction is GTP + S-adenosyl-L-methionine = N(7)-methyl-GTP + S-adenosyl-L-homocysteine. It catalyses the reaction N(7)-methyl-GTP + L-histidyl-[protein] = N(tele)-(N(7)-methylguanosine 5'-phospho)-L-histidyl-[protein] + diphosphate. The enzyme catalyses N(tele)-(N(7)-methylguanosine 5'-phospho)-L-histidyl-[protein] + a 5'-end diphospho-(purine-ribonucleoside) in mRNA + H(+) = a 5'-end (N(7)-methyl 5'-triphosphoguanosine)-(purine-ribonucleoside) in mRNA + L-histidyl-[protein]. It carries out the reaction a 5'-end triphospho-ribonucleoside in mRNA + H2O = a 5'-end diphospho-ribonucleoside in mRNA + phosphate + H(+). The catalysed reaction is a ribonucleoside 5'-triphosphate + H2O = a ribonucleoside 5'-diphosphate + phosphate + H(+). It catalyses the reaction ATP + H2O = ADP + phosphate + H(+). The enzyme catalyses RNA(n) + a ribonucleoside 5'-triphosphate = RNA(n+1) + diphosphate. It carries out the reaction RNA(n) + ATP = RNA(n)-3'-adenine ribonucleotide + diphosphate. The catalysed reaction is 4-O-(ADP-D-ribosyl)-L-aspartyl-[protein] + H2O = L-aspartyl-[protein] + ADP-D-ribose + H(+). It catalyses the reaction 5-O-(ADP-D-ribosyl)-L-glutamyl-[protein] + H2O = L-glutamyl-[protein] + ADP-D-ribose + H(+). The enzyme catalyses ADP-alpha-D-ribose 1''-phosphate + H2O = ADP-D-ribose + phosphate. Inactive precursor of the viral replicase, which is activated by cleavages carried out by the viral protease nsP2. Functionally, the early replication complex formed by the polyprotein P123 and nsP4 synthesizes minus-strand RNAs. As soon P123 is cleaved into mature proteins, the plus-strand RNAs synthesis begins. In terms of biological role, the early replication complex formed by the polyprotein P123' and nsP4 synthesizes minus-strand RNAs. Polyprotein P123' is a short-lived polyprotein that accumulates during early stage of infection. As soon P123' is cleaved into mature proteins, the plus-strand RNAs synthesis begins. Its function is as follows. Cytoplasmic capping enzyme that catalyzes two virus-specific reactions: methyltransferase and nsP1 guanylyltransferase. mRNA-capping is necessary since all viral RNAs are synthesized in the cytoplasm, and host capping enzymes are restricted to the nucleus. The enzymatic reaction involves a covalent link between 7-methyl-GMP and nsP1, whereas eukaryotic capping enzymes form a covalent complex only with GMP. nsP1 capping consists in the following reactions: GTP is first methylated into 7-methyl-GMP and then is covalently linked to nsP1 to form the m7GMp-nsP1 complex from which 7-methyl-GMP complex is transferred to the mRNA to create the cap structure. NsP1 is needed for the initiation of the minus-strand RNAs synthesis. Probably serves as a membrane anchor for the replication complex composed of nsP1-nsP4. Palmitoylated nsP1 is remodeling host cell cytoskeleton, and induces filopodium-like structure formation at the surface of the host cell. Multifunctional protein whose N-terminus is part of the RNA polymerase complex and displays NTPase, RNA triphosphatase and helicase activities. NTPase and RNA triphosphatase are involved in viral RNA capping and helicase keeps a check on the dsRNA replication intermediates. The C-terminus harbors a protease that specifically cleaves the polyproteins and releases the mature proteins. Required for the shutoff of minus-strand RNAs synthesis. Specifically inhibits the host IFN response by promoting the nuclear export of host STAT1. Also inhibits host transcription by inducing rapid proteasome-dependent degradation of POLR2A, a catalytic subunit of the RNAPII complex. The resulting inhibition of cellular protein synthesis serves to ensure maximal viral gene expression and to evade host immune response. Functionally, seems to be essential for minus-strand RNAs and subgenomic 26S mRNAs synthesis. Displays mono-ADP-ribosylhydrolase activity. ADP-ribosylation is a post-translational modification that controls various processes of the host cell and the virus probably needs to revert it for optimal viral replication. Binds proteins of FXR family and sequesters them into the viral RNA replication complexes thereby inhibiting the formation of host stress granules on viral mRNAs. The nsp3-FXR complexes bind viral RNAs and probably orchestrate the assembly of viral replication complexes, thanks to the ability of FXR family members to self-assemble and bind DNA. In terms of biological role, seems to be essential for minus-strand RNAs and subgenomic 26S mRNAs synthesis. Displays mono-ADP-ribosylhydrolase activity. ADP-ribosylation is a post-translantional modification that controls various processes of the host cell and the virus probably needs to revert it for optimal viral replication. Binds proteins of G3BP family and sequesters them into the viral RNA replication complexes thereby inhibiting the formation of host stress granules on viral mRNAs. The nsp3'-G3BP complexes bind viral RNAs and probably orchestrate the assembly of viral replication complexes, thanks to the ability of G3BP family members to self-assemble and bind DNA. Its function is as follows. RNA dependent RNA polymerase. Replicates genomic and antigenomic RNA by recognizing replications specific signals. The early replication complex formed by the polyprotein P123 and nsP4 synthesizes minus-strand RNAs. The late replication complex composed of fully processed nsP1-nsP4 is responsible for the production of genomic and subgenomic plus-strand RNAs. The core catalytic domain of nsP4 also possesses terminal adenylyltransferase (TATase) activity that is probably involved in maintenance and repair of the poly(A) tail, an element required for replication of the viral genome. This Barmah forest virus (BFV) protein is Polyprotein P1234.